We begin with the raw amino-acid sequence, 689 residues long: Glycine--tRNA ligase beta subunit (689 aa).

It belongs to the class-II aminoacyl-tRNA synthetase family. As to quaternary structure, tetramer of two alpha and two beta subunits.

Its subcellular location is the cytoplasm. The catalysed reaction is tRNA(Gly) + glycine + ATP = glycyl-tRNA(Gly) + AMP + diphosphate. In Shigella boydii serotype 18 (strain CDC 3083-94 / BS512), this protein is Glycine--tRNA ligase beta subunit.